A 394-amino-acid chain; its full sequence is 8-amino-7-oxononanoate synthase (394 aa).

Residue arginine 21 participates in substrate binding. 112 to 113 lines the pyridoxal 5'-phosphate pocket; sequence GY. Position 137 (histidine 137) interacts with substrate. Pyridoxal 5'-phosphate contacts are provided by serine 183, histidine 211, and threonine 239. At lysine 242 the chain carries N6-(pyridoxal phosphate)lysine. Position 358 (threonine 358) interacts with substrate.

This sequence belongs to the class-II pyridoxal-phosphate-dependent aminotransferase family. BioF subfamily. As to quaternary structure, homodimer. Pyridoxal 5'-phosphate serves as cofactor.

It catalyses the reaction 6-carboxyhexanoyl-[ACP] + L-alanine + H(+) = (8S)-8-amino-7-oxononanoate + holo-[ACP] + CO2. Its pathway is cofactor biosynthesis; biotin biosynthesis. Catalyzes the decarboxylative condensation of pimeloyl-[acyl-carrier protein] and L-alanine to produce 8-amino-7-oxononanoate (AON), [acyl-carrier protein], and carbon dioxide. The protein is 8-amino-7-oxononanoate synthase of Burkholderia pseudomallei (strain K96243).